The sequence spans 286 residues: Cysteine-rich repeat secretory protein 57 (286 aa).

Residues 1–20 (METTKKLSVLLCLFFTMNQA) form the signal peptide. Over 21-265 (ISESDSDEHM…PSRSGSFSIR (245 aa)) the chain is Extracellular. Gnk2-homologous domains lie at 29 to 131 (HMAT…DKFF) and 137 to 247 (TKPN…TSNS). N-linked (GlcNAc...) asparagine glycans are attached at residues Asn-35, Asn-40, Asn-44, Asn-60, Asn-69, Asn-90, Asn-100, Asn-108, Asn-209, and Asn-246. The helical transmembrane segment at 266–284 (GNNKILVGMILAVSVFAFL) threads the bilayer. At 285–286 (GL) the chain is on the cytoplasmic side.

This sequence belongs to the cysteine-rich repeat secretory protein family.

The protein localises to the membrane. This chain is Cysteine-rich repeat secretory protein 57 (CRRSP57), found in Arabidopsis thaliana (Mouse-ear cress).